We begin with the raw amino-acid sequence, 340 residues long: Glycerol-3-phosphate dehydrogenase [NAD(P)+] (340 aa).

NADPH is bound by residues S14, F15, R35, and K108. Residues K108 and G136 each contribute to the sn-glycerol 3-phosphate site. A140 serves as a coordination point for NADPH. Sn-glycerol 3-phosphate is bound by residues K191, D244, S254, R255, and N256. The active-site Proton acceptor is the K191. R255 provides a ligand contact to NADPH. Residue E281 participates in NADPH binding.

Belongs to the NAD-dependent glycerol-3-phosphate dehydrogenase family.

Its subcellular location is the cytoplasm. The catalysed reaction is sn-glycerol 3-phosphate + NAD(+) = dihydroxyacetone phosphate + NADH + H(+). The enzyme catalyses sn-glycerol 3-phosphate + NADP(+) = dihydroxyacetone phosphate + NADPH + H(+). It functions in the pathway membrane lipid metabolism; glycerophospholipid metabolism. In terms of biological role, catalyzes the reduction of the glycolytic intermediate dihydroxyacetone phosphate (DHAP) to sn-glycerol 3-phosphate (G3P), the key precursor for phospholipid synthesis. The polypeptide is Glycerol-3-phosphate dehydrogenase [NAD(P)+] (Pseudomonas paraeruginosa (strain DSM 24068 / PA7) (Pseudomonas aeruginosa (strain PA7))).